Reading from the N-terminus, the 837-residue chain is V-type proton ATPase 116 kDa subunit a 1 (837 aa).

The Cytoplasmic portion of the chain corresponds to 1-388 (MGELFRSEEM…DAYGIGTYRE (388 aa)). T250 and T360 each carry phosphothreonine. The residue at position 364 (Y364) is a Phosphotyrosine. The chain crosses the membrane as a helical span at residues 389–407 (INPAPYTIITFPFLFAVMF). At 408–409 (GD) the chain is on the vacuolar side. Residues 410–426 (FGHGILMTLFAVWMVLR) form a helical membrane-spanning segment. Residues 427 to 441 (ESRILSQKNENEMFS) are Cytoplasmic-facing. A helical transmembrane segment spans residues 442 to 471 (TVFSGRYIILLMGVFSMYTGLIYNDCFSKS). Topologically, residues 472–534 (LNIFGSSWSV…ATNKLTFLNS (63 aa)) are vacuolar. N488 is a glycosylation site (N-linked (GalNAc...) asparagine). Residues 535–554 (FKMKMSVILGIIHMLFGVSL) traverse the membrane as a helical segment. The Cytoplasmic segment spans residues 555–572 (SLFNHIYFKKPLNIYFGF). The chain crosses the membrane as a helical span at residues 573–593 (IPEIIFMTSLFGYLVILIFYK). Residues 594–638 (WTAYDAHTSENAPSLLIHFINMFLFSYPESGYSMLYSGQKGIQCF) are Vacuolar-facing. A helical transmembrane segment spans residues 639–658 (LVVVALLCVPWMLLFKPLVL). The Cytoplasmic segment spans residues 659–724 (RRQYLRRKHL…DTMVHQAIHT (66 aa)). Residues 725 to 749 (IEYCLGCISNTASYLRLWALSLAHA) traverse the membrane as a helical segment. The Vacuolar segment spans residues 750–770 (QLSEVLWTMVIHIGLSVKSLA). A helical transmembrane segment spans residues 771–809 (GGLVLFFFFTAFATLTVAILLIMEGLSAFLHALRLHWVE). Residues 810 to 837 (FQNKFYSGTGFKFLPFSFEHIREGKFEE) lie on the Cytoplasmic side of the membrane.

Belongs to the V-ATPase 116 kDa subunit family. V-ATPase is a heteromultimeric enzyme made up of two complexes: the ATP-hydrolytic V1 complex and the proton translocation V0 complex. The V1 complex consists of three catalytic AB heterodimers that form a heterohexamer, three peripheral stalks each consisting of EG heterodimers, one central rotor including subunits D and F, and the regulatory subunits C and H. The proton translocation complex V0 consists of the proton transport subunit a, a ring of proteolipid subunits c9c'', rotary subunit d, subunits e and f, and the accessory subunits ATP6AP1/Ac45 and ATP6AP2/PRR. Interacts with SPAAR.

The protein localises to the cytoplasmic vesicle. It is found in the clathrin-coated vesicle membrane. The protein resides in the secretory vesicle. It localises to the synaptic vesicle membrane. Its subcellular location is the melanosome. Subunit of the V0 complex of vacuolar(H+)-ATPase (V-ATPase), a multisubunit enzyme composed of a peripheral complex (V1) that hydrolyzes ATP and a membrane integral complex (V0) that transports protons across cellular membranes. V-ATPase is responsible for the acidification of various organelles, such as lysosomes, endosomes, the trans-Golgi network, and secretory granules, including synaptic vesicles. In certain cell types, can be exported to the plasma membrane, where it is involved in the acidification of the extracellular environment. Required for assembly and activity of the vacuolar ATPase. Through its action on compartment acidification, plays an essential role in neuronal development in terms of integrity and connectivity of neurons. The protein is V-type proton ATPase 116 kDa subunit a 1 (ATP6V0A1) of Homo sapiens (Human).